The chain runs to 22 residues: Myofibril-bound serine protease (22 aa).

Belongs to the peptidase S1 family. As to expression, detected in muscle (at protein level).

It is found in the cytoplasm. With respect to regulation, inhibited by the serine protease inhibitors, antipain, aprotinin, DFP, leupeptin, STI and TLCK, and by the cysteine proteinase inhibitors DTNB and to a lesser extent E-64. Not inhibited by the metalloproteinase inhibitor EDTA. Functionally, serine protease that selectively cleaves Arg-|-Xaa bonds. The polypeptide is Myofibril-bound serine protease (Cyprinus carpio (Common carp)).